A 209-amino-acid polypeptide reads, in one-letter code: Orotate phosphoribosyltransferase (209 aa).

Residues R98, K102, H104, and 124–132 each bind 5-phospho-alpha-D-ribose 1-diphosphate; that span reads EDLISTGKS. S128 lines the orotate pocket.

Belongs to the purine/pyrimidine phosphoribosyltransferase family. PyrE subfamily. As to quaternary structure, homodimer. The cofactor is Mg(2+).

It catalyses the reaction orotidine 5'-phosphate + diphosphate = orotate + 5-phospho-alpha-D-ribose 1-diphosphate. The protein operates within pyrimidine metabolism; UMP biosynthesis via de novo pathway; UMP from orotate: step 1/2. Its function is as follows. Catalyzes the transfer of a ribosyl phosphate group from 5-phosphoribose 1-diphosphate to orotate, leading to the formation of orotidine monophosphate (OMP). This chain is Orotate phosphoribosyltransferase, found in Malacoplasma penetrans (strain HF-2) (Mycoplasma penetrans).